The sequence spans 533 residues: Lymphocyte cytosolic protein 2 (533 aa).

Residues 12 to 78 (VLAWNSDNLA…SQDINKNEER (67 aa)) form the SAM domain. Residue Tyr23 is modified to Phosphotyrosine. Disordered regions lie at residues 78–359 (RRSI…PLAH) and 374–419 (SASL…TPLD). The segment covering 94 to 144 (ETESHEEDDGGWSSFEDDYESPNDDDPDGEDDGDYESPNEEEQALVDDAAD) has biased composition (acidic residues). Positions 151-172 (NNEEALQSSILPPNSFHNTNSM) are enriched in polar residues. Residues 186–201 (PPVPPLRPKPALPPLP) show a composition bias toward pro residues. Phosphoserine occurs at positions 207 and 210. A compositionally biased stretch (polar residues) spans 340–354 (NTFPSRSVQPSSKNT). Residues Ser376 and Ser410 each carry the phosphoserine modification. Pro residues predominate over residues 400 to 411 (LPVPNRPQPPSP). One can recognise an SH2 domain in the interval 422–530 (WYVSYITRPE…RYQCTLTHAA (109 aa)).

As to quaternary structure, interacts with SLA. Interacts with CBLB. Interacts with GRB2. Interacts with SHB. Interacts with PRAM1. Interacts (via SH2 domain) with CD6 (via tyrosine phosphorylated C-terminus). Interacts with FYB1 and the phosphorylated form of FYB2. Interacts with 14-3-3 adapter/YWHAZ; this phosphorylation leads to YWHAZ proteolytic degradation. Interacts with VAV1; this interaction plays a role in TCR-mediated cytokine production. Interacts with AGER; this interaction plays an important role in AGER-mediated pro-inflammatory responses and cytokine release. Phosphorylated after T-cell receptor activation by ZAP70, ITK and TXK, which leads to the up-regulation of Th1 preferred cytokine IL-2. SYK-dependent phosphorylation is required for recruitment of PI3K signaling components. In terms of tissue distribution, highly expressed in spleen, thymus, and peripheral blood leukocytes.

The protein resides in the cytoplasm. Functionally, adapter protein primarily involved in signaling pathways within T-cells, as well as other immune cells such as platelets, mast cells, and natural killer (NK) cells. Plays a crucial role for transducing signal from the T-cell receptor (TCR) after antigen recognition leading to T-cell activation. Mechanistically, once phosphorylated by the kinase ZAP70, mediates interactions with the guanine-nucleotide exchange factor VAV1, the adapter protein NCK and the kinase ITK. In turn, stimulates the activation of PKC-theta/PRKCQ and NF-kappa-B transcriptional activity in response to CD3 and CD28 costimulation. Also plays an essential role in AGER-induced signaling pathways including p38 MAPK and ERK1/2 activation leading to cytokine release and pro-inflammatory responses. In Mus musculus (Mouse), this protein is Lymphocyte cytosolic protein 2 (Lcp2).